The chain runs to 89 residues: UPF0297 protein MGAS9429_Spy1808 (89 aa).

This sequence belongs to the UPF0297 family.

This chain is UPF0297 protein MGAS9429_Spy1808, found in Streptococcus pyogenes serotype M12 (strain MGAS9429).